Reading from the N-terminus, the 319-residue chain is Pyrroline-5-carboxylate reductase 1, mitochondrial (319 aa).

At S2 the chain carries N-acetylserine. Residues 6–11 (IGAGQL) and S34 contribute to the NADP(+) site. NADPH-binding residues include A8, Q10, L11, S34, D36, N56, V70, K71, and A97. Residues N56, 69–72 (AVKP), and 95–97 (CAA) each bind NADP(+). E164 contacts L-proline. Position 230 (N230) interacts with NADPH. The L-proline site is built by A237 and T238. A phosphoserine mark is found at S278 and S301. Positions 294-319 (SPAGTALSPSGHTKLLPRSLAPAGKD) are disordered.

Belongs to the pyrroline-5-carboxylate reductase family. In terms of assembly, homodecamer; composed of 5 homodimers. Interacts with LTO1.

The protein resides in the mitochondrion. It catalyses the reaction L-proline + NADP(+) = (S)-1-pyrroline-5-carboxylate + NADPH + 2 H(+). The catalysed reaction is L-proline + NAD(+) = (S)-1-pyrroline-5-carboxylate + NADH + 2 H(+). It functions in the pathway amino-acid biosynthesis; L-proline biosynthesis; L-proline from L-glutamate 5-semialdehyde: step 1/1. Its activity is regulated as follows. Subject to competitive inhibition by the reaction product proline. Subject to competitive inhibition by stearoyl coenzyme A. In terms of biological role, oxidoreductase that catalyzes the last step in proline biosynthesis, which corresponds to the reduction of pyrroline-5-carboxylate to L-proline using NAD(P)H. At physiologic concentrations, has higher specific activity in the presence of NADH. Involved in the cellular response to oxidative stress. The polypeptide is Pyrroline-5-carboxylate reductase 1, mitochondrial (Homo sapiens (Human)).